The chain runs to 629 residues: DNA mismatch repair protein MutL (629 aa).

The protein belongs to the DNA mismatch repair MutL/HexB family.

Its function is as follows. This protein is involved in the repair of mismatches in DNA. It is required for dam-dependent methyl-directed DNA mismatch repair. May act as a 'molecular matchmaker', a protein that promotes the formation of a stable complex between two or more DNA-binding proteins in an ATP-dependent manner without itself being part of a final effector complex. The protein is DNA mismatch repair protein MutL of Haemophilus influenzae (strain 86-028NP).